Here is a 514-residue protein sequence, read N- to C-terminus: Cytochrome P450 monooxygenase verB (514 aa).

A helical transmembrane segment spans residues 5-25; the sequence is WLSASVLITAVILLVDYLNYY. Heme is bound at residue Cys-457.

Belongs to the cytochrome P450 family. The cofactor is heme.

The protein resides in the membrane. The protein operates within mycotoxin biosynthesis. Cytochrome P450 monooxygenase; part of the gene cluster that mediates the biosynthesis of 11'-deoxyverticillin A, one of the dimeric epipolythiodioxopiperazines (ETPs) from the verticillin family that act as mycotoxins. 11'-deoxyverticillin A is required for normal conidiation. The nonribosomal peptide synthetase verP is speculated to be responsible for condensation of amino acids to form the carbon skeleton of verticillin, whereas the cluster-specific tailoring enzymes are involved in further modifications leading to the production of 11'-deoxyverticillin A. In Clonostachys rogersoniana, this protein is Cytochrome P450 monooxygenase verB.